We begin with the raw amino-acid sequence, 189 residues long: Probable nicotinate-nucleotide adenylyltransferase (189 aa).

The protein belongs to the NadD family.

The catalysed reaction is nicotinate beta-D-ribonucleotide + ATP + H(+) = deamido-NAD(+) + diphosphate. The protein operates within cofactor biosynthesis; NAD(+) biosynthesis; deamido-NAD(+) from nicotinate D-ribonucleotide: step 1/1. Catalyzes the reversible adenylation of nicotinate mononucleotide (NaMN) to nicotinic acid adenine dinucleotide (NaAD). The sequence is that of Probable nicotinate-nucleotide adenylyltransferase from Bacillus cereus (strain AH187).